The chain runs to 3393 residues: Genome polyprotein (3393 aa).

The Cytoplasmic portion of the chain corresponds to 1–91; it reads MVNPKGVNVM…GVSRRKKRRS (91 aa). The interval 28–60 is hydrophobic; homodimerization of capsid protein C; the sequence is VSRGLRGFVLFVLTQLFMGRKLTPNVRRLWKSS. The propeptide at 91–108 is ER anchor for the capsid protein C, removed in mature form by serine protease NS3; the sequence is SATTSGTVFMAMLGLTLA. A helical membrane pass occupies residues 92–112; the sequence is ATTSGTVFMAMLGLTLAASVA. Residues 113 to 231 are Extracellular-facing; it reads RHAHHTLINI…FETQVQKVEK (119 aa). N-linked (GlcNAc...) asparagine; by host glycosylation is found at Asn-121 and Asn-137. A helical transmembrane segment spans residues 232-252; the sequence is WIIRNPTYAIAAILMSWYIGN. Topologically, residues 253 to 257 are cytoplasmic; sequence SLKQR. A helical transmembrane segment spans residues 258-272; it reads VVLLLLTLALGPAYA. Topologically, residues 273–713 are extracellular; the sequence is THCVGIPKRD…IHTVFGTAFH (441 aa). 5 disulfides stabilise this stretch: Cys-275-Cys-302, Cys-346-Cys-377, Cys-364-Cys-388, Cys-453-Cys-553, and Cys-570-Cys-600. The tract at residues 370–383 is fusion peptide; that stretch reads DRGWGNGCGLFGKG. A helical transmembrane segment spans residues 714 to 734; the sequence is GIFGGLSWMTRILIGVLLVWL. Over 735-745 the chain is Cytoplasmic; it reads GLNSRNGTATT. The helical transmembrane segment at 746–763 threads the bilayer; the sequence is LMMLTGFIILFLSLGVGA. The Extracellular portion of the chain corresponds to 764–1112; that stretch reads EVGCSVNWGQ…TPEKHLVRSW (349 aa). Intrachain disulfides connect Cys-767–Cys-778, Cys-818–Cys-905, Cys-941–Cys-986, Cys-1043–Cys-1092, Cys-1054–Cys-1075, Cys-1054–Cys-1076, Cys-1075–Cys-1079, and Cys-1076–Cys-1079. Residues Asn-893 and Asn-970 are each glycosylated (N-linked (GlcNAc...) asparagine; by host). The helical transmembrane segment at 1113–1133 threads the bilayer; it reads VTAGDSYPAWSIGLVAMFLFV. The Cytoplasmic portion of the chain corresponds to 1134-1186; it reads DIMARSRPTRKMMIGGTMLLLAIMIMGELSYLDLLRYIIVVGEHFIERENGGD. The chain crosses the membrane as a helical span at residues 1187–1207; that stretch reads VAYMAIMAASHLRPGLMAMVF. At 1208–1283 the chain is on the lumenal side; sequence AKSMWSPKQR…PVSMPVIRKA (76 aa). Residues 1284 to 1304 form a helical membrane-spanning segment; that stretch reads SMIIGTGGLLLSLWKGGGSSM. Residues 1305 to 1341 are Cytoplasmic-facing; that stretch reads RKGLPLFAASAARVLGLTKAHLSVLFILLITKNGKRT. Residues 1342–1362 form a helical membrane-spanning segment; that stretch reads WPISECLAAVGIFGAAFGTMF. The Lumenal segment spans residues 1363-1365; the sequence is SED. Residues 1366-1386 traverse the membrane as a helical segment; sequence ETLLGPLALVGVVLIVYTMFT. The Cytoplasmic segment spans residues 1387–1438; the sequence is QSDGLELVKAADISWSDEAVVSGEARRFDVALNDSGEFKLLDEPPVSWLNVS. Residues 1393–1432 are interacts with and activates NS3 protease; the sequence is LVKAADISWSDEAVVSGEARRFDVALNDSGEFKLLDEPPV. Positions 1439–1459 form an intramembrane region, helical; the sequence is FLVVAIVASSLHPIALVVTLV. At 1460-2137 the chain is on the cytoplasmic side; that stretch reads AWTYWRTEKR…KLALQQAPEA (678 aa). The 180-residue stretch at 1470–1649 folds into the Peptidase S7 domain; that stretch reads SGVLWDVPLA…QPGSVAEVET (180 aa). Active-site charge relay system; for serine protease NS3 activity residues include His-1521, Asp-1545, and Ser-1606. The 157-residue stretch at 1653 to 1809 folds into the Helicase ATP-binding domain; that stretch reads DKMLRKGEFT…ESNAEIEDVK (157 aa). An important for RNA-binding region spans residues 1657 to 1660; that stretch reads RKGE. 1666–1673 is an ATP binding site; the sequence is YHPGAGKT. The DEAH box signature appears at 1757–1760; the sequence is DEAH. The Helicase C-terminal domain occupies 1804–1984; sequence EIEDVKKEIP…VAPLYEEEAS (181 aa). Residues 2138 to 2158 form a helical membrane-spanning segment; sequence VSTLLLLGMMAICTLGLVILL. The Lumenal portion of the chain corresponds to 2159–2168; it reads MKPKATDKMS. The helical intramembrane region spans 2169-2184; that stretch reads MAMVTMAITGYLLKLG. Residue Gly-2185 is a topological domain, lumenal. Residues 2186–2206 form a helical membrane-spanning segment; sequence MTHAQVGGILLVFFIMMVVII. The Cytoplasmic portion of the chain corresponds to 2207–2221; it reads PESGTQRSINDNKLA. Residues 2222 to 2236 traverse the membrane as a helical segment; the sequence is YVIILVGLVIGGVAC. Topologically, residues 2237 to 2275 are lumenal; sequence NELGWLEKTKADLFGNNMTHAQTVVLPTINWNWLDFRPG. The segment at residues 2276–2296 is an intramembrane region (helical); that stretch reads AAWSLYVGMATFLTPVFVHWI. The Lumenal portion of the chain corresponds to 2297–2344; the sequence is KNEYGNASLTGITPTAGILGALNQGVPFVKLNTSVGVLLLSVWNNFTT. Residues 2345–2365 traverse the membrane as a helical segment; sequence SSMLAAMVMLACHCLFVLPGV. At 2366-2408 the chain is on the cytoplasmic side; sequence RAQCLREAQIRVFHGVAKNPMVDGNPTVDLEKENDMPDLYEKK. Residues 2409–2429 traverse the membrane as a helical segment; the sequence is LALVALGMAAVLNAAMVRTAL. Residues 2430–2457 lie on the Lumenal side of the membrane; that stretch reads TTAEMVVLGSAAVGPLLEGNTSAFWNGP. A helical transmembrane segment spans residues 2458-2478; the sequence is LAVAVAGVMRGNHYALIGIVY. The Cytoplasmic segment spans residues 2479–3393; sequence NLWLLKTARR…QRCSAYGELL (915 aa). An mRNA cap 0-1 NS5-type MT domain is found at 2489–2753; it reads GGSSALTYGE…DLIYPTGTRS (265 aa). Ser-2544 is a binding site for S-adenosyl-L-methionine. Phosphoserine is present on Ser-2544. The active-site For 2'-O-MTase activity is the Lys-2549. Positions 2574, 2575, 2592, 2593, 2619, and 2620 each coordinate S-adenosyl-L-methionine. The active-site For 2'-O-MTase activity is the Asp-2634. Residue Ile-2635 coordinates S-adenosyl-L-methionine. Catalysis depends on for 2'-O-MTase activity residues Lys-2670 and Glu-2706. Tyr-2708 is a binding site for S-adenosyl-L-methionine. The Nuclear localization signal motif lies at 2860-2893; that stretch reads REIMKVVNQWLFDYLGRTKQPRICTKEEFINKVR. Zn(2+) contacts are provided by Glu-2927, His-2931, Cys-2936, and Cys-2939. One can recognise a RdRp catalytic domain in the interval 3017–3169; the sequence is GLVYADDTAG…APVDESFAGA (153 aa). The Zn(2+) site is built by His-3204, Cys-3220, and Cys-3339.

The protein in the N-terminal section; belongs to the class I-like SAM-binding methyltransferase superfamily. mRNA cap 0-1 NS5-type methyltransferase family. In terms of assembly, homodimer. Interacts (via N-terminus) with host EXOC1 (via C-terminus); this interaction results in EXOC1 degradation through the proteasome degradation pathway. Forms heterodimers with envelope protein E in the endoplasmic reticulum and Golgi. As to quaternary structure, homodimer; in the endoplasmic reticulum and Golgi. Interacts with protein prM. Interacts with non-structural protein 1. In terms of assembly, homodimer; Homohexamer when secreted. Interacts with envelope protein E. Interacts (via N-terminus) with serine protease NS3. As to quaternary structure, forms a heterodimer with serine protease NS3. May form homooligomers. In terms of assembly, forms a heterodimer with NS2B. Interacts with non-structural protein 2A (via N-terminus). Interacts with NS4B. Interacts with unphosphorylated RNA-directed RNA polymerase NS5; this interaction stimulates RNA-directed RNA polymerase NS5 guanylyltransferase activity. NS3 interacts with host PDCD6IP; this interaction contributes to virion release. Interacts with serine protease NS3. As to quaternary structure, homodimer. Interacts with host STAT2; this interaction prevents the establishment of cellular antiviral state. Interacts with host TRIM23; this interaction leads to NS5 ubiquitination. Post-translationally, specific enzymatic cleavages in vivo yield mature proteins. The nascent capsid protein C contains a C-terminal hydrophobic domain that act as a signal sequence for translocation of prM into the lumen of the ER. Mature capsid protein C is cleaved at a site upstream of this hydrophobic domain by NS3. prM is cleaved in post-Golgi vesicles by a host furin, releasing the mature small envelope protein M, and peptide pr. Non-structural protein 2A-alpha, a C-terminally truncated form of non-structural protein 2A, results from partial cleavage by NS3. Specific enzymatic cleavages in vivo yield mature proteins peptide 2K acts as a signal sequence and is removed from the N-terminus of NS4B by the host signal peptidase in the ER lumen. Signal cleavage at the 2K-4B site requires a prior NS3 protease-mediated cleavage at the 4A-2K site. In terms of processing, cleaved in post-Golgi vesicles by a host furin, releasing the mature small envelope protein M, and peptide pr. This cleavage is incomplete as up to 30% of viral particles still carry uncleaved prM. N-glycosylated. Post-translationally, N-glycosylated. The excreted form is glycosylated and this is required for efficient secretion of the protein from infected cells. In terms of processing, polyubiquitinated; ubiquitination is probably mediated by host TRIM23 and is prerequisite for NS5-STAT2 interaction. NS5 is not ISGylated or sumoylated. Phosphorylated on serines residues. This phosphorylation may trigger NS5 nuclear localization.

Its subcellular location is the virion. It is found in the host nucleus. The protein localises to the host cytoplasm. It localises to the host perinuclear region. The protein resides in the secreted. Its subcellular location is the virion membrane. It is found in the host endoplasmic reticulum membrane. The enzyme catalyses Selective hydrolysis of -Xaa-Xaa-|-Yaa- bonds in which each of the Xaa can be either Arg or Lys and Yaa can be either Ser or Ala.. The catalysed reaction is RNA(n) + a ribonucleoside 5'-triphosphate = RNA(n+1) + diphosphate. It catalyses the reaction a ribonucleoside 5'-triphosphate + H2O = a ribonucleoside 5'-diphosphate + phosphate + H(+). It carries out the reaction ATP + H2O = ADP + phosphate + H(+). The enzyme catalyses a 5'-end (5'-triphosphoguanosine)-ribonucleoside in mRNA + S-adenosyl-L-methionine = a 5'-end (N(7)-methyl 5'-triphosphoguanosine)-ribonucleoside in mRNA + S-adenosyl-L-homocysteine. The catalysed reaction is a 5'-end (N(7)-methyl 5'-triphosphoguanosine)-ribonucleoside in mRNA + S-adenosyl-L-methionine = a 5'-end (N(7)-methyl 5'-triphosphoguanosine)-(2'-O-methyl-ribonucleoside) in mRNA + S-adenosyl-L-homocysteine + H(+). Plays a role in virus budding by binding to the cell membrane and gathering the viral RNA into a nucleocapsid that forms the core of a mature virus particle. During virus entry, may induce genome penetration into the host cytoplasm after hemifusion induced by the surface proteins. Can migrate to the cell nucleus where it modulates host functions. In terms of biological role, inhibits RNA silencing by interfering with host Dicer. Its function is as follows. Prevents premature fusion activity of envelope proteins in trans-Golgi by binding to envelope protein E at pH6.0. After virion release in extracellular space, gets dissociated from E dimers. Functionally, acts as a chaperone for envelope protein E during intracellular virion assembly by masking and inactivating envelope protein E fusion peptide. prM is the only viral peptide matured by host furin in the trans-Golgi network probably to avoid catastrophic activation of the viral fusion activity in acidic Golgi compartment prior to virion release. prM-E cleavage is inefficient, and many virions are only partially matured. These uncleaved prM would play a role in immune evasion. May play a role in virus budding. Exerts cytotoxic effects by activating a mitochondrial apoptotic pathway through M ectodomain. May display a viroporin activity. In terms of biological role, binds to host cell surface receptor and mediates fusion between viral and cellular membranes. Envelope protein is synthesized in the endoplasmic reticulum in the form of heterodimer with protein prM. They play a role in virion budding in the ER, and the newly formed immature particle is covered with 60 spikes composed of heterodimer between precursor prM and envelope protein E. The virion is transported to the Golgi apparatus where the low pH causes dissociation of PrM-E heterodimers and formation of E homodimers. prM-E cleavage is inefficient, and many virions are only partially matured. These uncleaved prM would play a role in immune evasion. Its function is as follows. Involved in immune evasion, pathogenesis and viral replication. Once cleaved off the polyprotein, is targeted to three destinations: the viral replication cycle, the plasma membrane and the extracellular compartment. Essential for viral replication. Required for formation of the replication complex and recruitment of other non-structural proteins to the ER-derived membrane structures. Excreted as a hexameric lipoparticle that plays a role against host immune response. Antagonizing the complement function. Binds to the host macrophages and dendritic cells. Inhibits signal transduction originating from Toll-like receptor 3 (TLR3). Functionally, component of the viral RNA replication complex that functions in virion assembly and antagonizes the host immune response. Required cofactor for the serine protease function of NS3. May have membrane-destabilizing activity and form viroporins. In terms of biological role, displays three enzymatic activities: serine protease, NTPase and RNA helicase. NS3 serine protease, in association with NS2B, performs its autocleavage and cleaves the polyprotein at dibasic sites in the cytoplasm: C-prM, NS2A-NS2B, NS2B-NS3, NS3-NS4A, NS4A-2K and NS4B-NS5. NS3 RNA helicase binds RNA and unwinds dsRNA in the 3' to 5' direction. Also plays a role in virus assembly. Its function is as follows. Regulates the ATPase activity of the NS3 helicase activity. NS4A allows NS3 helicase to conserve energy during unwinding. Functionally, functions as a signal peptide for NS4B and is required for the interferon antagonism activity of the latter. Induces the formation of ER-derived membrane vesicles where the viral replication takes place. Inhibits interferon (IFN)-induced host STAT1 phosphorylation and nuclear translocation, thereby preventing the establishment of cellular antiviral state by blocking the IFN-alpha/beta pathway. In terms of biological role, replicates the viral (+) and (-) RNA genome, and performs the capping of genomes in the cytoplasm. NS5 methylates viral RNA cap at guanine N-7 and ribose 2'-O positions. Besides its role in RNA genome replication, also prevents the establishment of cellular antiviral state by blocking the interferon-alpha/beta (IFN-alpha/beta) signaling pathway. IFN-I induces binding of NS5 to host IFN-activated transcription factor STAT2, preventing its transcriptional activity. Host TRIM23 is the E3 ligase that interacts with and polyubiquitinates NS5 to promote its binding to STAT2 and trigger IFN-I signaling inhibition. The polypeptide is Genome polyprotein (Banzi virus (BANV)).